Reading from the N-terminus, the 150-residue chain is MIIEEIVGNIANFSDSEKGKHMEKVYLENSDLVKRIQRVTTDHGNEIGIRLKQPIDLQYGDILYKDDKNMIVVDVNSEDLLVIKPRTLQEMGDIAHQLGNRHLPAQFTETEMLVQYDYLVESLLKDLGIPYEHEDRKVNKAFRHIGHSHD.

Belongs to the UreE family.

The protein resides in the cytoplasm. Functionally, involved in urease metallocenter assembly. Binds nickel. Probably functions as a nickel donor during metallocenter assembly. The chain is Urease accessory protein UreE from Staphylococcus saprophyticus subsp. saprophyticus (strain ATCC 15305 / DSM 20229 / NCIMB 8711 / NCTC 7292 / S-41).